The chain runs to 396 residues: Zinc metalloproteinase nas-24 (396 aa).

Residues 1–20 (MTRVVHIIGAAFLLSSYAYC) form the signal peptide. The Peptidase M12A domain maps to 44 to 230 (ERLGSKWLGG…YKINQYYGCG (187 aa)). Asparagine 63 and asparagine 79 each carry an N-linked (GlcNAc...) asparagine glycan. 4 disulfides stabilise this stretch: cysteine 82–cysteine 229, cysteine 105–cysteine 129, cysteine 231–cysteine 251, and cysteine 253–cysteine 262. Position 137 (histidine 137) interacts with Zn(2+). Glutamate 138 is a catalytic residue. Residues histidine 141 and histidine 147 each coordinate Zn(2+). The EGF-like domain occupies 224–263 (NQYYGCGCSTQLECKNGGYTSPSDCSRCNCPKGFFGKLCN). An N-linked (GlcNAc...) asparagine glycan is attached at asparagine 310.

It depends on Zn(2+) as a cofactor.

The protein resides in the secreted. In terms of biological role, metalloprotease. This Caenorhabditis elegans protein is Zinc metalloproteinase nas-24 (nas-24).